Reading from the N-terminus, the 291-residue chain is Formamidopyrimidine-DNA glycosylase (291 aa).

P2 functions as the Schiff-base intermediate with DNA in the catalytic mechanism. Catalysis depends on E3, which acts as the Proton donor. K58 (proton donor; for beta-elimination activity) is an active-site residue. DNA is bound by residues H100, R123, and K166. An FPG-type zinc finger spans residues 257–291 (SVYGREGKECLQCGTPIIRILQSGRSSFYCSQCQK). R281 functions as the Proton donor; for delta-elimination activity in the catalytic mechanism.

The protein belongs to the FPG family. As to quaternary structure, monomer. Zn(2+) serves as cofactor.

It carries out the reaction Hydrolysis of DNA containing ring-opened 7-methylguanine residues, releasing 2,6-diamino-4-hydroxy-5-(N-methyl)formamidopyrimidine.. The catalysed reaction is 2'-deoxyribonucleotide-(2'-deoxyribose 5'-phosphate)-2'-deoxyribonucleotide-DNA = a 3'-end 2'-deoxyribonucleotide-(2,3-dehydro-2,3-deoxyribose 5'-phosphate)-DNA + a 5'-end 5'-phospho-2'-deoxyribonucleoside-DNA + H(+). In terms of biological role, involved in base excision repair of DNA damaged by oxidation or by mutagenic agents. Acts as a DNA glycosylase that recognizes and removes damaged bases. Has a preference for oxidized purines, such as 7,8-dihydro-8-oxoguanine (8-oxoG). Has AP (apurinic/apyrimidinic) lyase activity and introduces nicks in the DNA strand. Cleaves the DNA backbone by beta-delta elimination to generate a single-strand break at the site of the removed base with both 3'- and 5'-phosphates. This chain is Formamidopyrimidine-DNA glycosylase, found in Bartonella tribocorum (strain CIP 105476 / IBS 506).